Here is a 499-residue protein sequence, read N- to C-terminus: 3-octaprenyl-4-hydroxybenzoate carboxy-lyase (499 aa).

N173 is a binding site for Mn(2+). Residues 176 to 178 (IYR), 190 to 192 (RWL), and 195 to 196 (RG) contribute to the prenylated FMN site. E239 lines the Mn(2+) pocket. The Proton donor role is filled by D288.

The protein belongs to the UbiD family. As to quaternary structure, homohexamer. Requires prenylated FMN as cofactor. Mn(2+) serves as cofactor.

It localises to the cell membrane. The enzyme catalyses a 4-hydroxy-3-(all-trans-polyprenyl)benzoate + H(+) = a 2-(all-trans-polyprenyl)phenol + CO2. It participates in cofactor biosynthesis; ubiquinone biosynthesis. In terms of biological role, catalyzes the decarboxylation of 3-octaprenyl-4-hydroxy benzoate to 2-octaprenylphenol, an intermediate step in ubiquinone biosynthesis. This Blochmanniella floridana protein is 3-octaprenyl-4-hydroxybenzoate carboxy-lyase.